Here is a 232-residue protein sequence, read N- to C-terminus: Small ribosomal subunit protein uS2 (232 aa).

Belongs to the universal ribosomal protein uS2 family.

In Syntrophomonas wolfei subsp. wolfei (strain DSM 2245B / Goettingen), this protein is Small ribosomal subunit protein uS2.